The sequence spans 508 residues: GATA zinc finger domain-containing protein 13 (508 aa).

2 disordered regions span residues 20 to 51 (YSKN…INNN) and 203 to 296 (MSII…PEIE). Over residues 23 to 51 (NNNNNNNNNNNNNINNNNNNNNNNNINNN) the composition is skewed to low complexity. Over residues 203 to 224 (MSIIPSDNFPTPQLPLETNTDL) the composition is skewed to polar residues. Positions 225 to 247 (NNTSDCSSTTFSSPPSSAFNSPN) are enriched in low complexity. The span at 248-266 (LQNDYTQPQNQKSQSSTIV) shows a compositional bias: polar residues. The segment covering 269 to 279 (NSSKSKSKNNK) has biased composition (basic residues). The GATA-type zinc finger occupies 327 to 354 (CSICKIKCSIYWRRILINEVRTSVCNAC). Residues 356–433 (LRTMKKTKKE…NNNNNNNNNN (78 aa)) are a coiled coil. The segment covering 399–482 (TTTTTTTTTS…NNNNNDNYND (84 aa)) has biased composition (low complexity). The interval 399–484 (TTTTTTTTTS…NNNDNYNDSI (86 aa)) is disordered.

The polypeptide is GATA zinc finger domain-containing protein 13 (gtaM) (Dictyostelium discoideum (Social amoeba)).